The following is a 425-amino-acid chain: 2-(3-amino-3-carboxypropyl)histidine synthase subunit 1 (425 aa).

A disordered region spans residues 1 to 29; the sequence is MSGSTESKKQPRRRFIGRKSGNSNNDKLT. Residues 1–60 form a required for function but dispensable for interaction with DPH2 and DPH3 region; the sequence is MSGSTESKKQPRRRFIGRKSGNSNNDKLTTVAENGNEIIHKQKSRIALGRSVNHVPEDIL. A compositionally biased stretch (polar residues) spans 20–29; that stretch reads SGNSNNDKLT. Ser44 is modified (phosphoserine). Positions 133, 239, and 368 each coordinate [4Fe-4S] cluster. The required for function but dispensable for interaction with DPH2 and DPH3 stretch occupies residues 366–425; that stretch reads VACPRLSIDWGYAFNKPLLTPYEASVLLKKDVMFSEKYYPMDYYEAKGYGRGETPKHAIE.

Belongs to the DPH1/DPH2 family. DPH1 subfamily. In terms of assembly, component of the 2-(3-amino-3-carboxypropyl)histidine synthase complex composed of DPH1, DPH2, KTI11/DPH3 and a NADH-dependent reductase, predominantly CBR1. Interacts with DPH2; the interaction is direct. Interacts with KTI11/DPH3. [4Fe-4S] cluster serves as cofactor.

It is found in the cytoplasm. It catalyses the reaction L-histidyl-[translation elongation factor 2] + S-adenosyl-L-methionine = 2-[(3S)-amino-3-carboxypropyl]-L-histidyl-[translation elongation factor 2] + S-methyl-5'-thioadenosine + H(+). The protein operates within protein modification; peptidyl-diphthamide biosynthesis. Functionally, catalyzes the first step of diphthamide biosynthesis, a post-translational modification of histidine which occurs in elongation factor 2. In association with DPH2, transfers a 3-amino-3-carboxypropyl (ACP) group from S-adenosyl-L-methionine (SAM) to a histidine residue, the reaction is assisted by a reduction system comprising KTI11/DPH3 and a NADH-dependent reductase, predominantly CBR1. The protein is 2-(3-amino-3-carboxypropyl)histidine synthase subunit 1 (DPH1) of Saccharomyces cerevisiae (strain ATCC 204508 / S288c) (Baker's yeast).